Consider the following 245-residue polypeptide: 2,3-bisphosphoglycerate-dependent phosphoglycerate mutase (245 aa).

Substrate-binding positions include 8–15, 21–22, Arg-60, 87–90, Lys-98, 114–115, and 183–184; these read RHGQSLWN, TG, ERHY, RR, and GN. Residue His-9 is the Tele-phosphohistidine intermediate of the active site. Glu-87 (proton donor/acceptor) is an active-site residue.

This sequence belongs to the phosphoglycerate mutase family. BPG-dependent PGAM subfamily.

It catalyses the reaction (2R)-2-phosphoglycerate = (2R)-3-phosphoglycerate. It functions in the pathway carbohydrate degradation; glycolysis; pyruvate from D-glyceraldehyde 3-phosphate: step 3/5. In terms of biological role, catalyzes the interconversion of 2-phosphoglycerate and 3-phosphoglycerate. The chain is 2,3-bisphosphoglycerate-dependent phosphoglycerate mutase from Bacillus thuringiensis subsp. konkukian (strain 97-27).